A 599-amino-acid polypeptide reads, in one-letter code: Elongation factor 4 (599 aa).

Residues 5 to 187 (SHIRNFSIIA…HLVRVIPPPQ (183 aa)) form the tr-type G domain. GTP contacts are provided by residues 17–22 (DHGKST) and 134–137 (NKMD).

It belongs to the TRAFAC class translation factor GTPase superfamily. Classic translation factor GTPase family. LepA subfamily.

The protein resides in the cell inner membrane. The enzyme catalyses GTP + H2O = GDP + phosphate + H(+). Required for accurate and efficient protein synthesis under certain stress conditions. May act as a fidelity factor of the translation reaction, by catalyzing a one-codon backward translocation of tRNAs on improperly translocated ribosomes. Back-translocation proceeds from a post-translocation (POST) complex to a pre-translocation (PRE) complex, thus giving elongation factor G a second chance to translocate the tRNAs correctly. Binds to ribosomes in a GTP-dependent manner. The polypeptide is Elongation factor 4 (Azotobacter vinelandii (strain DJ / ATCC BAA-1303)).